A 412-amino-acid chain; its full sequence is MPGSRVIESTSRTSRKVKLSLMGPAFIAAIGYIDPGNFATNIQSGAAYGYTLLWVVVWANLMAMLIQLLSAKLGIATGKNLAEHIRDRFPRPAVWAYWVQAEIIAMATDLAEFIGAAIGFKLLLGVSLLEGAILTAIATFLILMLQQRGQKPLEMVIGGLLLFVAAAYIVELVFSQPELSALAKGMAMPSLPTSDAVLLAAGVLGATIMPHVIYLHSSLTQHEGSHTRAERYSATKVDVAIAMTIAGFVNLAMMATAAAAFHFSGNQDIADLDKAYLTLEPLLGKAAAVIFGLSLVAAGLSSTVVGTLAGQVVMQGFVRFHIPLWVRRSVTMLPSFIVILSGMDPTRVLVLSQVVLSFGIALALVPLLSFTGNRELMGTMVNGKWVQRIGQLIVVLVVSLNMYLLIDTMSGI.

The next 10 helical transmembrane spans lie at 19-39 (LSLM…GNFA), 46-66 (AAYG…AMLI), 98-118 (WVQA…GAAI), 122-142 (LLLG…TFLI), 155-175 (MVIG…LVFS), 196-216 (AVLL…IYLH), 241-261 (IAMT…AAAF), 286-306 (AAAV…TVVG), 348-368 (VLVL…VPLL), and 392-412 (LIVV…MSGI).

The protein belongs to the NRAMP family.

The protein localises to the cell inner membrane. Its function is as follows. H(+)-stimulated, divalent metal cation uptake system. The sequence is that of Divalent metal cation transporter MntH from Pectobacterium carotovorum subsp. carotovorum (strain PC1).